The following is a 453-amino-acid chain: Chromosomal replication initiator protein DnaA (453 aa).

The tract at residues 1–74 (MKEKQFWNRI…GFEIYDAEIT (74 aa)) is domain I, interacts with DnaA modulators. Positions 74-113 (TPHYIFTKPQDTTSSQVEEATNLTLYDYSPKLVSIPYSDT) are domain II. Residues 114-331 (GLKEKYTFDN…GAINDITLIA (218 aa)) form a domain III, AAA+ region region. 4 residues coordinate ATP: glycine 158, glycine 160, lysine 161, and threonine 162. Residues 332-453 (RVKKIKDITI…EIESIKKKIK (122 aa)) form a domain IV, binds dsDNA region.

The protein belongs to the DnaA family. In terms of assembly, oligomerizes as a right-handed, spiral filament on DNA at oriC.

Its subcellular location is the cytoplasm. In terms of biological role, plays an essential role in the initiation and regulation of chromosomal replication. ATP-DnaA binds to the origin of replication (oriC) to initiate formation of the DNA replication initiation complex once per cell cycle. Binds the DnaA box (a 9 base pair repeat at the origin) and separates the double-stranded (ds)DNA. Forms a right-handed helical filament on oriC DNA; dsDNA binds to the exterior of the filament while single-stranded (ss)DNA is stabiized in the filament's interior. The ATP-DnaA-oriC complex binds and stabilizes one strand of the AT-rich DNA unwinding element (DUE), permitting loading of DNA polymerase. After initiation quickly degrades to an ADP-DnaA complex that is not apt for DNA replication. Binds acidic phospholipids. This is Chromosomal replication initiator protein DnaA from Streptococcus pneumoniae (strain P1031).